Consider the following 122-residue polypeptide: Large ribosomal subunit protein uL14 (122 aa).

It belongs to the universal ribosomal protein uL14 family. Part of the 50S ribosomal subunit. Forms a cluster with proteins L3 and L19. In the 70S ribosome, L14 and L19 interact and together make contacts with the 16S rRNA in bridges B5 and B8.

Functionally, binds to 23S rRNA. Forms part of two intersubunit bridges in the 70S ribosome. The polypeptide is Large ribosomal subunit protein uL14 (Geobacter sulfurreducens (strain ATCC 51573 / DSM 12127 / PCA)).